Reading from the N-terminus, the 258-residue chain is Phosphate import ATP-binding protein PstB (258 aa).

The 243-residue stretch at 5-247 (IETKDLDIYY…ERIFSNPKEK (243 aa)) folds into the ABC transporter domain. 37 to 44 (GPSGCGKS) provides a ligand contact to ATP.

It belongs to the ABC transporter superfamily. Phosphate importer (TC 3.A.1.7) family. In terms of assembly, the complex is composed of two ATP-binding proteins (PstB), two transmembrane proteins (PstC and PstA) and a solute-binding protein (PstS).

The protein resides in the cell membrane. It catalyses the reaction phosphate(out) + ATP + H2O = ADP + 2 phosphate(in) + H(+). Part of the ABC transporter complex PstSACB involved in phosphate import. Responsible for energy coupling to the transport system. The sequence is that of Phosphate import ATP-binding protein PstB from Cutibacterium acnes (strain DSM 16379 / KPA171202) (Propionibacterium acnes).